The primary structure comprises 355 residues: UDP-N-acetylglucosamine--N-acetylmuramyl-(pentapeptide) pyrophosphoryl-undecaprenol N-acetylglucosamine transferase (355 aa).

Residues 15-17 (TGG), Asn-127, Arg-163, Ser-191, Ile-244, 263-268 (ALTVSE), and Gln-288 contribute to the UDP-N-acetyl-alpha-D-glucosamine site.

This sequence belongs to the glycosyltransferase 28 family. MurG subfamily.

Its subcellular location is the cell inner membrane. The enzyme catalyses di-trans,octa-cis-undecaprenyl diphospho-N-acetyl-alpha-D-muramoyl-L-alanyl-D-glutamyl-meso-2,6-diaminopimeloyl-D-alanyl-D-alanine + UDP-N-acetyl-alpha-D-glucosamine = di-trans,octa-cis-undecaprenyl diphospho-[N-acetyl-alpha-D-glucosaminyl-(1-&gt;4)]-N-acetyl-alpha-D-muramoyl-L-alanyl-D-glutamyl-meso-2,6-diaminopimeloyl-D-alanyl-D-alanine + UDP + H(+). It participates in cell wall biogenesis; peptidoglycan biosynthesis. Its function is as follows. Cell wall formation. Catalyzes the transfer of a GlcNAc subunit on undecaprenyl-pyrophosphoryl-MurNAc-pentapeptide (lipid intermediate I) to form undecaprenyl-pyrophosphoryl-MurNAc-(pentapeptide)GlcNAc (lipid intermediate II). In Salmonella newport (strain SL254), this protein is UDP-N-acetylglucosamine--N-acetylmuramyl-(pentapeptide) pyrophosphoryl-undecaprenol N-acetylglucosamine transferase.